Reading from the N-terminus, the 120-residue chain is Prefoldin subunit beta (120 aa).

The protein belongs to the prefoldin subunit beta family. Heterohexamer of two alpha and four beta subunits.

It is found in the cytoplasm. Functionally, molecular chaperone capable of stabilizing a range of proteins. Seems to fulfill an ATP-independent, HSP70-like function in archaeal de novo protein folding. The protein is Prefoldin subunit beta (pfdB) of Methanopyrus kandleri (strain AV19 / DSM 6324 / JCM 9639 / NBRC 100938).